Consider the following 409-residue polypeptide: Elongation factor Tu (409 aa).

In terms of domain architecture, tr-type G spans 10–214 (KPHVNIGTIG…EVDAYIPEPE (205 aa)). Residues 19-26 (GHVDHGKT) form a G1 region. Position 19–26 (19–26 (GHVDHGKT)) interacts with GTP. Thr-26 lines the Mg(2+) pocket. The segment at 60–64 (GITIN) is G2. Positions 81–84 (DCPG) are G3. Residues 81-85 (DCPGH) and 136-139 (NKQD) contribute to the GTP site. Positions 136-139 (NKQD) are G4. Residues 174 to 176 (SAL) are G5.

This sequence belongs to the TRAFAC class translation factor GTPase superfamily. Classic translation factor GTPase family. EF-Tu/EF-1A subfamily. As to quaternary structure, monomer.

It localises to the cytoplasm. It carries out the reaction GTP + H2O = GDP + phosphate + H(+). Functionally, GTP hydrolase that promotes the GTP-dependent binding of aminoacyl-tRNA to the A-site of ribosomes during protein biosynthesis. The protein is Elongation factor Tu of Rippkaea orientalis (strain PCC 8801 / RF-1) (Cyanothece sp. (strain PCC 8801)).